Reading from the N-terminus, the 366-residue chain is Isocitrate dehydrogenase [NAD] subunit alpha, mitochondrial (366 aa).

The N-terminal 27 residues, 1–27 (MAGPAWISKVSRLLGAFHNQKQVTRGF), are a transit peptide targeting the mitochondrion. Lys77 carries the post-translational modification N6-succinyllysine. Position 101 is a phosphothreonine (Thr101). Positions 115, 125, and 146 each coordinate substrate. The residue at position 223 (Lys223) is an N6-acetyllysine. Residues Asp233, Asp257, and Asp261 each coordinate Mg(2+). Lys343 carries the post-translational modification N6-acetyllysine; alternate. An N6-succinyllysine; alternate modification is found at Lys343. Residue Lys350 is modified to N6-succinyllysine.

Belongs to the isocitrate and isopropylmalate dehydrogenases family. As to quaternary structure, heterooligomer of subunits alpha (IDH3A), beta (IDH3B), and gamma (IDH3G) in the apparent ratio of 2:1:1. The heterodimer containing one IDH3A and one IDH3B subunit and the heterodimer containing one IDH3A and one IDH3G subunit assemble into a heterotetramer (which contains two subunits of IDH3A, one of IDH3B and one of IDH3G) and further into the heterooctamer. Requires Mg(2+) as cofactor. Mn(2+) serves as cofactor.

It is found in the mitochondrion. The enzyme catalyses D-threo-isocitrate + NAD(+) = 2-oxoglutarate + CO2 + NADH. The heterotetramer and the heterodimer composed of IDH3A and IDH3G subunits can be allosterically activated by citrate (CIT) or/and ADP, and the two activators can act independently or synergistically. The heterodimer composed of IDH3A and IDH3B subunits cannot be allosterically regulated and the allosteric regulation of the heterotetramer is through the IDH3G subunit and not the IDH3B subunit. The IDH3G subunit contains the allosteric site which consists of a CIT-binding site and an ADP-binding site, and the binding of CIT and ADP causes conformational changes at the allosteric site which are transmitted to the active site in the catalytic subunit (IDH3A) through a cascade of conformational changes at the heterodimer interface, leading to stabilization of the isocitrate-binding at the active site and thus activation of the enzyme. ATP can activate the heterotetramer and the heterodimer composed of IDH3A and IDH3G subunits at low concentrations but inhibits their activities at high concentrations, whereas ATP exhibits only inhibitory effect on the heterodimer composed of IDH3A and IDH3B subunits. Its function is as follows. Catalytic subunit of the enzyme which catalyzes the decarboxylation of isocitrate (ICT) into alpha-ketoglutarate. The heterodimer composed of the alpha (IDH3A) and beta (IDH3B) subunits and the heterodimer composed of the alpha (IDH3A) and gamma (IDH3G) subunits, have considerable basal activity but the full activity of the heterotetramer (containing two subunits of IDH3A, one of IDH3B and one of IDH3G) requires the assembly and cooperative function of both heterodimers. The sequence is that of Isocitrate dehydrogenase [NAD] subunit alpha, mitochondrial (IDH3A) from Sus scrofa (Pig).